Consider the following 305-residue polypeptide: tRNA dimethylallyltransferase (305 aa).

9–16 (GPTASGKS) is an ATP binding site. Substrate is bound at residue 11–16 (TASGKS). The interval 34–37 (DSKQ) is interaction with substrate tRNA.

It belongs to the IPP transferase family. Monomer. The cofactor is Mg(2+).

It carries out the reaction adenosine(37) in tRNA + dimethylallyl diphosphate = N(6)-dimethylallyladenosine(37) in tRNA + diphosphate. Catalyzes the transfer of a dimethylallyl group onto the adenine at position 37 in tRNAs that read codons beginning with uridine, leading to the formation of N6-(dimethylallyl)adenosine (i(6)A). The polypeptide is tRNA dimethylallyltransferase (Anaplasma marginale (strain Florida)).